The following is an 831-amino-acid chain: Phosphoinositide phosphatase SAC4 (831 aa).

Residues 162–551 (LCMVDLTKDF…GDTLAYQYGG (390 aa)) enclose the SAC domain. A disordered region spans residues 439–475 (SDADTSPHNSSDDDSRDYDSLEKNCRPSKNVANGDYD). Residues 448-463 (SSDDDSRDYDSLEKNC) are compositionally biased toward basic and acidic residues. The short motif at 487–498 (RTNCIDCLDRTN) is the Phosphatase catalytic core element. The tract at residues 785–805 (PAMRESGSSSRKGKEPVETEL) is disordered. Residues 796–805 (KGKEPVETEL) are compositionally biased toward basic and acidic residues.

Component of the PI(3,5)P2 regulatory complex at least composed of ATG18, SAC/FIG4, FAB1 and VAC14. Mg(2+) is required as a cofactor. Ubiquitous with a higher level of expression in young seedlings than in other tissues.

The protein localises to the vacuole membrane. It catalyses the reaction a 1,2-diacyl-sn-glycero-3-phospho-(1D-myo-inositol-3,5-bisphosphate) + H2O = a 1,2-diacyl-sn-glycero-3-phospho-(1D-myo-inositol-3-phosphate) + phosphate. In terms of biological role, the PI(3,5)P2 regulatory complex regulates both the synthesis and turnover of phosphatidylinositol 3,5-bisphosphate (PtdIns(3,5)P2). This Arabidopsis thaliana (Mouse-ear cress) protein is Phosphoinositide phosphatase SAC4 (SAC4).